An 89-amino-acid polypeptide reads, in one-letter code: Probable Fe(2+)-trafficking protein (89 aa).

Belongs to the Fe(2+)-trafficking protein family.

Functionally, could be a mediator in iron transactions between iron acquisition and iron-requiring processes, such as synthesis and/or repair of Fe-S clusters in biosynthetic enzymes. This is Probable Fe(2+)-trafficking protein from Legionella pneumophila (strain Paris).